A 105-amino-acid chain; its full sequence is N(4)-acetylcytidine amidohydrolase (105 aa).

Positions 7-93 (TFFERFEHDI…VIAEIYPGLE (87 aa)) constitute an ASCH domain. The Proton acceptor role is filled by K21. The Nucleophile role is filled by T24. E74 serves as the catalytic Proton donor.

This sequence belongs to the N(4)-acetylcytidine amidohydrolase family.

It carries out the reaction N(4)-acetylcytidine + H2O = cytidine + acetate + H(+). It catalyses the reaction N(4)-acetyl-2'-deoxycytidine + H2O = 2'-deoxycytidine + acetate + H(+). The catalysed reaction is N(4)-acetylcytosine + H2O = cytosine + acetate + H(+). In terms of biological role, catalyzes the hydrolysis of N(4)-acetylcytidine (ac4C). The protein is N(4)-acetylcytidine amidohydrolase of Shewanella baltica (strain OS223).